The sequence spans 557 residues: Eudesmanediol synthase (557 aa).

Mg(2+)-binding residues include D310 and D314. Positions 310, 314, 450, and 453 each coordinate substrate. Positions 310–314 (DDTFD) match the DDXXD motif motif. Mg(2+)-binding residues include N453 and S457.

The protein belongs to the terpene synthase family. In terms of assembly, monomer. Mg(2+) serves as cofactor. Mn(2+) is required as a cofactor. Specifically expressed in roots.

The protein resides in the cytoplasm. It carries out the reaction (2E,6E)-farnesyl diphosphate + 2 H2O = 7-epi-ent-eudesmane-5,11-diol + diphosphate. Its pathway is secondary metabolite biosynthesis; terpenoid biosynthesis. Component of the volatile terpenes biosynthesis pathways. Dihydroxylated sesquiterpenoid synthase that generates dually hydroxylated products directly from (E,E)-farnesyl diphosphate, primarily eudesmane-2,11-diol, along with two closely related structural isomers. The polypeptide is Eudesmanediol synthase (Zea mays (Maize)).